We begin with the raw amino-acid sequence, 258 residues long: Apolipoprotein A-I (258 aa).

The N-terminal stretch at 1–18 (MKFLVLALTILLAAGTQA) is a signal peptide. The interval 32–63 (VKAALNMYIAQVKLTAQRSIDLLDDTEYKEYK) is 3 X approximate tandem repeats. Repeat copies occupy residues 64-85 (MQLS…KSWP) and 86-106 (PTPR…AEVM). A 10 X approximate tandem repeats region spans residues 64 to 258 (MQLSQSLDNL…WLSTRPSARP (195 aa)). The stretch at 107 to 117 (KDVEDVRTQLE) is one 3; half-length repeat. 7 repeat units span residues 118–139 (PKRA…KKLE), 140–161 (PLIK…AKID), 162–183 (PVVE…TKLM), 184–205 (PIVE…TLAA), 206–227 (PYAE…EKVA), 228–238 (PLSEDFKARWA), and 239–258 (PPPR…SARP). The segment at 233–258 (FKARWAPPPRRPSKSSWLSTRPSARP) is disordered. Polar residues predominate over residues 246–258 (KSSWLSTRPSARP).

It belongs to the apolipoprotein A1/A4/E family. In terms of tissue distribution, major protein of plasma HDL, also found in chylomicrons. Expressed in liver, intestine and muscle.

It localises to the secreted. In terms of biological role, participates in the reverse transport of cholesterol from tissues to the liver for excretion by promoting cholesterol efflux from tissues and by acting as a cofactor for the lecithin cholesterol acyltransferase (LCAT). This Salmo salar (Atlantic salmon) protein is Apolipoprotein A-I (apoa1).